The following is a 318-amino-acid chain: Transaldolase (318 aa).

The active-site Schiff-base intermediate with substrate is lysine 126.

The protein belongs to the transaldolase family. Type 1 subfamily. Homodimer.

The protein resides in the cytoplasm. It catalyses the reaction D-sedoheptulose 7-phosphate + D-glyceraldehyde 3-phosphate = D-erythrose 4-phosphate + beta-D-fructose 6-phosphate. It participates in carbohydrate degradation; pentose phosphate pathway; D-glyceraldehyde 3-phosphate and beta-D-fructose 6-phosphate from D-ribose 5-phosphate and D-xylulose 5-phosphate (non-oxidative stage): step 2/3. Transaldolase is important for the balance of metabolites in the pentose-phosphate pathway. This Variovorax paradoxus (strain S110) protein is Transaldolase.